We begin with the raw amino-acid sequence, 340 residues long: Protein-arginine kinase (340 aa).

The Phosphagen kinase C-terminal domain occupies 21-242; that stretch reads VVLSSRIRLA…EQIIMQERVA (222 aa). Residues 24 to 28, His-79, Arg-113, 164 to 168, and 195 to 200 contribute to the ATP site; these read SSRIR, RASVM, and RGIYGE.

The protein belongs to the ATP:guanido phosphotransferase family.

It carries out the reaction L-arginyl-[protein] + ATP = N(omega)-phospho-L-arginyl-[protein] + ADP + H(+). Catalyzes the specific phosphorylation of arginine residues in proteins. The sequence is that of Protein-arginine kinase from Listeria monocytogenes serotype 4b (strain F2365).